Reading from the N-terminus, the 406-residue chain is MNGFAVIPSVTTTTTSGEPIAGDVARKQNLLELNREGLERFFENVLGEKRYRAHQVMKWIHHRYVSDFEQMTDVGKALRARLQACAEVRVPCVVFDKHSADGTHKWLLAMDTDSKNAIETVYIPDKGRGTLCVSSQIGCGLNCTFCSTATQGFNRNLTTAEIIGQVWVAARHLGNVPHQQRRLTNVVMMGMGEPLMNFDNVVRAMSVMRDDLGYGLSNKRVTLSTSGLVPMIDRLSTESDVSLAVSLHAPNDKLREQLVPLNKKYPIAELMASCERYLSVNRKRDSVTFEYTLMKGVNDKQEHAHELVKLMRQFDCAMQVKGAAKVNLIPFNPFPGTYYERSTEVDIRAFQKILLDAQILAMVRRTRGDDIDAACGQLKGQVVDRTRRQAEFRRTIEDRVGRDVAA.

The Proton acceptor role is filled by Glu-119. The Radical SAM core domain maps to 125-370; sequence DKGRGTLCVS…AMVRRTRGDD (246 aa). Cys-132 and Cys-375 are disulfide-bonded. [4Fe-4S] cluster contacts are provided by Cys-139, Cys-143, and Cys-146. S-adenosyl-L-methionine-binding positions include 192–193, Ser-224, 246–248, and Asn-332; these read GE and SLH. Catalysis depends on Cys-375, which acts as the S-methylcysteine intermediate.

The protein belongs to the radical SAM superfamily. RlmN family. [4Fe-4S] cluster is required as a cofactor.

It is found in the cytoplasm. The enzyme catalyses adenosine(2503) in 23S rRNA + 2 reduced [2Fe-2S]-[ferredoxin] + 2 S-adenosyl-L-methionine = 2-methyladenosine(2503) in 23S rRNA + 5'-deoxyadenosine + L-methionine + 2 oxidized [2Fe-2S]-[ferredoxin] + S-adenosyl-L-homocysteine. It catalyses the reaction adenosine(37) in tRNA + 2 reduced [2Fe-2S]-[ferredoxin] + 2 S-adenosyl-L-methionine = 2-methyladenosine(37) in tRNA + 5'-deoxyadenosine + L-methionine + 2 oxidized [2Fe-2S]-[ferredoxin] + S-adenosyl-L-homocysteine. In terms of biological role, specifically methylates position 2 of adenine 2503 in 23S rRNA and position 2 of adenine 37 in tRNAs. m2A2503 modification seems to play a crucial role in the proofreading step occurring at the peptidyl transferase center and thus would serve to optimize ribosomal fidelity. This Xylella fastidiosa (strain 9a5c) protein is Dual-specificity RNA methyltransferase RlmN.